Reading from the N-terminus, the 630-residue chain is Pentatricopeptide repeat-containing protein At2g03880, mitochondrial (630 aa).

The N-terminal 76 residues, 1–76 (MKSVMSKIKL…LIKCCISNRA (76 aa)), are a transit peptide targeting the mitochondrion. PPR repeat units lie at residues 60–94 (DSATYSELIKCCISNRAVHEGNLICRHLYFNGHRP), 95–125 (MMFLVNVLINMYVKFNLLNDAHQLFDQMPQR), 126–160 (NVISWTTMISAYSKCKIHQKALELLVLMLRDNVRP), 161–192 (NVYTYSSVLRSCNGMSDVRMLHCGIIKEGLES), 193–223 (DVFVRSALIDVFAKLGEPEDALSVFDEMVTG), 224–258 (DAIVWNSIIGGFAQNSRSDVALELFKRMKRAGFIA), 259–289 (EQATLTSVLRACTGLALLELGMQAHVHIVKY), 292–322 (DLILNNALVDMYCKCGSLEDALRVFNQMKER), 323–357 (DVITWSTMISGLAQNGYSQEALKLFERMKSSGTKP), 358–388 (NYITIVGVLFACSHAGLLEDGWYYFRSMKKL), and 394–424 (VREHYGCMIDLLGKAGKLDDAVKLLNEMECE). Positions 429–504 (TWRTLLGACR…EPGCSWIEVN (76 aa)) are type E motif. Positions 505–535 (KQIHAFIIGDNSHPQIVEVSKKLNQLIHRLT) are type E(+) motif. The type DYW motif stretch occupies residues 536-630 (GIGYVPETNF…DGKCSCGDYW (95 aa)).

This sequence belongs to the PPR family. PCMP-H subfamily.

Its subcellular location is the mitochondrion. The sequence is that of Pentatricopeptide repeat-containing protein At2g03880, mitochondrial (PCMP-H44) from Arabidopsis thaliana (Mouse-ear cress).